Consider the following 108-residue polypeptide: UPF0060 membrane protein RER_49640 (108 aa).

4 helical membrane passes run 8–28 (LLFV…WQGI), 33–53 (GWIW…VATM), 62–82 (ILAA…VVMD), and 87–107 (DRFD…IMYA).

The protein belongs to the UPF0060 family.

The protein resides in the cell membrane. This is UPF0060 membrane protein RER_49640 from Rhodococcus erythropolis (strain PR4 / NBRC 100887).